Consider the following 387-residue polypeptide: MIKEETVSYFQTFDGVMAESDKEEELDATKAKVEKVREENEKLKLLLSTILNNYNSLQMQVSKVLGQQQGASSMELDHIDRQDENNDYDVDISLRLGRSEQKISKKEENKVDKISTKNVEESKDKRSALGFGFQIQSYEASKLDDLCRQVKLANAENKCVSSRKDVKSVRNENHQDVLEEHEQTGLKKTRVCVKASCEDPSINDGCQWRKYGQKTAKTNPLPRAYYRCSMSSNCPVRKQVQRCGEEETSAFMTTYEGNHDHPLPMEASHMAAGTSAAASLLQSGSSSSSSSTSASLSYFFPFHHFSISTTNSHPTVTLDLTRPNYPNQLPDDYPLSSSSFSLNFSSPDPPPPSSHDHTLNFSGLRTQAPLSTDSLLARYRTRLSGQQ.

Positions 197–264 (CEDPSINDGC…YEGNHDHPLP (68 aa)) form a DNA-binding region, WRKY. The segment at 322–366 (RPNYPNQLPDDYPLSSSSFSLNFSSPDPPPPSSHDHTLNFSGLRT) is disordered. A compositionally biased stretch (low complexity) spans 329 to 346 (LPDDYPLSSSSFSLNFSS).

Its subcellular location is the nucleus. Its function is as follows. Transcription factor. Interacts specifically with the W box (5'-(T)TGAC[CT]-3'), a frequently occurring elicitor-responsive cis-acting element. The protein is Probable WRKY transcription factor 36 (WRKY36) of Arabidopsis thaliana (Mouse-ear cress).